The sequence spans 305 residues: tRNA-cytidine(32) 2-sulfurtransferase (305 aa).

A disordered region spans residues 1–20; the sequence is MTAVLPLPQPLADPAPRDPR. Positions 59-64 match the PP-loop motif motif; that stretch reads SGGKDS. [4Fe-4S] cluster is bound by residues Cys-134, Cys-137, and Cys-225. Residues 282–293 show a composition bias toward low complexity; it reads DAPSDVDPDPSA. Residues 282-305 are disordered; sequence DAPSDVDPDPSAWLSASHAPHDSD.

The protein belongs to the TtcA family. As to quaternary structure, homodimer. Mg(2+) is required as a cofactor. It depends on [4Fe-4S] cluster as a cofactor.

Its subcellular location is the cytoplasm. The enzyme catalyses cytidine(32) in tRNA + S-sulfanyl-L-cysteinyl-[cysteine desulfurase] + AH2 + ATP = 2-thiocytidine(32) in tRNA + L-cysteinyl-[cysteine desulfurase] + A + AMP + diphosphate + H(+). It participates in tRNA modification. Catalyzes the ATP-dependent 2-thiolation of cytidine in position 32 of tRNA, to form 2-thiocytidine (s(2)C32). The sulfur atoms are provided by the cysteine/cysteine desulfurase (IscS) system. This Xanthomonas euvesicatoria pv. vesicatoria (strain 85-10) (Xanthomonas campestris pv. vesicatoria) protein is tRNA-cytidine(32) 2-sulfurtransferase.